The primary structure comprises 204 residues: Signal peptidase I (204 aa).

Over 1-10 the chain is Cytoplasmic; it reads MNLFKNFLKE. A helical membrane pass occupies residues 11–30; the sequence is WGLFLLILSLLALSRIFFWS. Residues 31–204 are Extracellular-facing; sequence NVRVEGHSMD…FWPITRIGTF (174 aa). Residues Ser38 and Lys76 contribute to the active site.

The protein belongs to the peptidase S26 family.

It localises to the cell membrane. It carries out the reaction Cleavage of hydrophobic, N-terminal signal or leader sequences from secreted and periplasmic proteins.. The chain is Signal peptidase I (lepB) from Streptococcus pneumoniae (strain ATCC BAA-255 / R6).